We begin with the raw amino-acid sequence, 302 residues long: Glutaminase (302 aa).

Residues Ser-61, Asn-111, Glu-155, Asn-162, Tyr-186, Tyr-238, and Val-256 each coordinate substrate.

Belongs to the glutaminase family. Homotetramer.

It catalyses the reaction L-glutamine + H2O = L-glutamate + NH4(+). This chain is Glutaminase, found in Pseudomonas paraeruginosa (strain DSM 24068 / PA7) (Pseudomonas aeruginosa (strain PA7)).